The chain runs to 694 residues: Elongation factor G 1 (694 aa).

Residues 5–280 form the tr-type G domain; it reads SRYRNIGIFA…AVVDYLPDPT (276 aa). GTP-binding positions include 14–21, 78–82, and 132–135; these read AHVDAGKT, DTPGH, and NKLD.

This sequence belongs to the TRAFAC class translation factor GTPase superfamily. Classic translation factor GTPase family. EF-G/EF-2 subfamily.

It localises to the cytoplasm. In terms of biological role, catalyzes the GTP-dependent ribosomal translocation step during translation elongation. During this step, the ribosome changes from the pre-translocational (PRE) to the post-translocational (POST) state as the newly formed A-site-bound peptidyl-tRNA and P-site-bound deacylated tRNA move to the P and E sites, respectively. Catalyzes the coordinated movement of the two tRNA molecules, the mRNA and conformational changes in the ribosome. The polypeptide is Elongation factor G 1 (Methylococcus capsulatus (strain ATCC 33009 / NCIMB 11132 / Bath)).